Consider the following 164-residue polypeptide: SsrA-binding protein (164 aa).

Belongs to the SmpB family.

Its subcellular location is the cytoplasm. Functionally, required for rescue of stalled ribosomes mediated by trans-translation. Binds to transfer-messenger RNA (tmRNA), required for stable association of tmRNA with ribosomes. tmRNA and SmpB together mimic tRNA shape, replacing the anticodon stem-loop with SmpB. tmRNA is encoded by the ssrA gene; the 2 termini fold to resemble tRNA(Ala) and it encodes a 'tag peptide', a short internal open reading frame. During trans-translation Ala-aminoacylated tmRNA acts like a tRNA, entering the A-site of stalled ribosomes, displacing the stalled mRNA. The ribosome then switches to translate the ORF on the tmRNA; the nascent peptide is terminated with the 'tag peptide' encoded by the tmRNA and targeted for degradation. The ribosome is freed to recommence translation, which seems to be the essential function of trans-translation. The protein is SsrA-binding protein of Shewanella woodyi (strain ATCC 51908 / MS32).